The chain runs to 470 residues: Glutamate--tRNA ligase (470 aa).

A 'HIGH' region motif is present at residues 15–25; sequence PSPTGFLHIGG. The 'KMSKS' region signature appears at 240-244; it reads KLSKR. K243 serves as a coordination point for ATP.

This sequence belongs to the class-I aminoacyl-tRNA synthetase family. Glutamate--tRNA ligase type 1 subfamily. As to quaternary structure, monomer.

The protein localises to the cytoplasm. The catalysed reaction is tRNA(Glu) + L-glutamate + ATP = L-glutamyl-tRNA(Glu) + AMP + diphosphate. Functionally, catalyzes the attachment of glutamate to tRNA(Glu) in a two-step reaction: glutamate is first activated by ATP to form Glu-AMP and then transferred to the acceptor end of tRNA(Glu). The chain is Glutamate--tRNA ligase from Caulobacter vibrioides (strain ATCC 19089 / CIP 103742 / CB 15) (Caulobacter crescentus).